The sequence spans 159 residues: Mating-type P-specific polypeptide Pi (159 aa).

The homeobox; TALE-type; partial DNA-binding region spans 103–159; the sequence is MTTVRGQCSKCTKPHLMRWLLLHYDNPYPSNSEFYDLSAATGLTRTQLRNWFSNRRR.

Belongs to the TALE/M-ATYP homeobox family.

It is found in the nucleus. In terms of biological role, mating type proteins are sequence specific DNA-binding proteins that act as master switches in yeast differentiation by controlling gene expression in a cell type-specific fashion. Required for meiosis, but plays no role in conjugation. This Schizosaccharomyces kambucha (Fission yeast) protein is Mating-type P-specific polypeptide Pi (matPi).